A 455-amino-acid polypeptide reads, in one-letter code: 23S rRNA (uracil(1939)-C(5))-methyltransferase RlmD (455 aa).

The TRAM domain occupies 12–70 (SKQLSAKLSLSVTQLDHLGAGIAQHQGKIVFIPGVLPGETATVQFVEQKKSYAKAKLIS). Cys83, Cys89, Cys92, and Cys174 together coordinate [4Fe-4S] cluster. Positions 288, 317, 322, 338, 365, and 385 each coordinate S-adenosyl-L-methionine. Cys411 serves as the catalytic Nucleophile.

Belongs to the class I-like SAM-binding methyltransferase superfamily. RNA M5U methyltransferase family. RlmD subfamily.

The catalysed reaction is uridine(1939) in 23S rRNA + S-adenosyl-L-methionine = 5-methyluridine(1939) in 23S rRNA + S-adenosyl-L-homocysteine + H(+). Its function is as follows. Catalyzes the formation of 5-methyl-uridine at position 1939 (m5U1939) in 23S rRNA. This chain is 23S rRNA (uracil(1939)-C(5))-methyltransferase RlmD, found in Shewanella frigidimarina (strain NCIMB 400).